An 847-amino-acid polypeptide reads, in one-letter code: Protein HIR2 (847 aa).

WD repeat units follow at residues 10 to 46, 113 to 153, 155 to 194, 259 to 305, and 309 to 348; these read LHDG…NAAT, KDNE…LKSS, ELKS…TTKL, KFSP…PLFD, and VVNS…LGDV. Positions 368-399 are disordered; the sequence is PFKPKAEEPDTKLPPNKTAQQTTTNSKKQPKA. The segment covering 384-394 has biased composition (polar residues); the sequence is KTAQQTTTNSK. 2 WD repeats span residues 508–548 and 558–597; these read RKDN…IYVT and PMLL…IAFP.

It belongs to the WD repeat HIR1 family.

Its subcellular location is the nucleus. Required for replication-independent chromatin assembly and for the periodic repression of histone gene transcription during the cell cycle. This Kluyveromyces lactis (strain ATCC 8585 / CBS 2359 / DSM 70799 / NBRC 1267 / NRRL Y-1140 / WM37) (Yeast) protein is Protein HIR2 (HIR2).